The chain runs to 586 residues: Serine/threonine-protein kinase TDA1 (586 aa).

The segment at 1–26 is disordered; that stretch reads MTTASSSASQLQQRLPEEKPWPQLSG. One can recognise a Protein kinase domain in the interval 39-351; that stretch reads VTNHNSLGDG…AKNLKQHPFI (313 aa). Residues 45–53 and lysine 68 each bind ATP; that span reads LGDGNFSVV. Catalysis depends on aspartate 180, which acts as the Proton acceptor. The disordered stretch occupies residues 503–524; the sequence is TTPESRSNFNTPKTLSRQGSST. Phosphothreonine is present on threonine 504. Phosphoserine occurs at positions 509 and 518. A Phosphothreonine modification is found at threonine 538. Serine 578 carries the phosphoserine modification.

Belongs to the protein kinase superfamily. Ser/Thr protein kinase family. Interacts with RIM11.

It is found in the cytoplasm. It localises to the nucleus. The catalysed reaction is L-seryl-[protein] + ATP = O-phospho-L-seryl-[protein] + ADP + H(+). It carries out the reaction L-threonyl-[protein] + ATP = O-phospho-L-threonyl-[protein] + ADP + H(+). In terms of biological role, serine/threonine protein kinase shown to have protein phosphorylation activity in vitro. The polypeptide is Serine/threonine-protein kinase TDA1 (TDA1) (Saccharomyces cerevisiae (strain ATCC 204508 / S288c) (Baker's yeast)).